Here is an 803-residue protein sequence, read N- to C-terminus: Volume-regulated anion channel subunit LRRC8C (803 aa).

Over 1–22 (MIPVTEFRQFSEQQPAFRVLKP) the chain is Cytoplasmic. Residues 23–48 (WWDVFTDYLSVAMLMIGVFGCTLQVM) form a helical membrane-spanning segment. At 49–124 (QDKIICLPKR…CYERALHWYA (76 aa)) the chain is on the extracellular side. Cystine bridges form between C54/C308 and C115/C293. A helical membrane pass occupies residues 125 to 144 (KYFPYLVLIHTLVFMLCSNF). The Cytoplasmic portion of the chain corresponds to 145–262 (WFKFPGSSSK…EEGDILYAMY (118 aa)). The tract at residues 177 to 206 (EVSGEDSEEKDNRKNNMNRSGTIQSGPEGN) is disordered. The segment covering 191–206 (NNMNRSGTIQSGPEGN) has biased composition (polar residues). Residues S212 and S215 each carry the phosphoserine modification. The helical transmembrane segment at 263-284 (VRQTVLKVIKFLIIIAYNSALV) threads the bilayer. Topologically, residues 285-314 (SKVQFTVDCNVDIQDMTGYKNFSCNHTMAH) are extracellular. A helical transmembrane segment spans residues 315–339 (LFSKLSFCYLCFVSIYGLTCLYTLY). Over 340-803 (WLFYRSLREY…SDVREQMKAD (464 aa)) the chain is Cytoplasmic. LRR repeat units follow at residues 409–420 (WTPDKLRQKLQT), 421–443 (NAHN…VFEI), 446–466 (LQSL…IAQL), 467–488 (DNLQ…ALSF), 490–513 (KENL…MYGL), 515–537 (NLEE…TLES), 541–563 (LKSL…VVDV), 566–586 (HLQK…NNLK), 588–611 (MTNL…VFSL), 613–635 (SLQE…SFQH), 637–659 (RKLT…IKKL), 660–682 (TSLE…LFLC), 684–705 (KIRY…IGVL), 706–728 (QSLQ…LYFC), 730–751 (KLKT…IGNL), 752–774 (LFLS…LGDC), and 776–799 (ALKR…VREQ).

It belongs to the LRRC8 family. In terms of assembly, heterohexamer; oligomerizes with other LRRC8 proteins (LRRC8A, LRRC8B, LRRC8D and/or LRRC8E) to form a heterohexamer. Homoheptamer; inactive, likely because it is not targeted to the plasma membrane in the absence of LRRC8A. In vivo, the subunit composition may depend primarily on expression levels, and heterooligomeric channels containing various proportions of the different LRRC8 proteins may coexist. In terms of tissue distribution, expressed at very low levels in adipose tissue.

Its subcellular location is the cell membrane. The protein resides in the endoplasmic reticulum membrane. The catalysed reaction is chloride(in) = chloride(out). It carries out the reaction iodide(out) = iodide(in). It catalyses the reaction taurine(out) = taurine(in). The enzyme catalyses 2',3'-cGAMP(out) = 2',3'-cGAMP(in). In terms of biological role, non-essential component of the volume-regulated anion channel (VRAC, also named VSOAC channel), an anion channel required to maintain a constant cell volume in response to extracellular or intracellular osmotic changes. The VRAC channel conducts iodide better than chloride and can also conduct organic osmolytes like taurine. Plays a redundant role in the efflux of amino acids, such as aspartate and glutamate, in response to osmotic stress. The VRAC channel also mediates transport of immunoreactive cyclic dinucleotide GMP-AMP (2'-3'-cGAMP), an immune messenger produced in response to DNA virus in the cytosol. Channel activity requires LRRC8A plus at least one other family member (LRRC8B, LRRC8C, LRRC8D or LRRC8E); channel characteristics depend on the precise subunit composition. May play a role in adipogenesis. This Mus musculus (Mouse) protein is Volume-regulated anion channel subunit LRRC8C.